We begin with the raw amino-acid sequence, 699 residues long: Macoilin-2 (699 aa).

4 consecutive transmembrane segments (helical) span residues 28 to 48, 75 to 95, 120 to 140, and 154 to 174; these read TFLY…DFVL, AFSV…LLFI, VCLP…AIRF, and FAAH…KSYV. Disordered regions lie at residues 219-289, 322-411, 432-451, and 679-699; these read AAAA…SILP, LLKD…PNNQ, LQAS…SLGT, and FMDT…PLKK. N-linked (GlcNAc...) asparagine glycosylation is found at N241, N267, N345, and N365. Basic and acidic residues predominate over residues 257-271; the sequence is LEYREKERGKNESKK. Positions 329-346 are enriched in low complexity; sequence SSSSSSTSSNSNKNYKNA. Low complexity predominate over residues 366 to 382; that stretch reads GSVPSSSGPSSSASSSS. N-linked (GlcNAc...) asparagine glycosylation occurs at N690.

The protein belongs to the macoilin family.

It is found in the nucleus membrane. It localises to the cell projection. Its subcellular location is the axon. The protein localises to the rough endoplasmic reticulum membrane. In terms of biological role, may play a role in the regulation of neuronal activity. The polypeptide is Macoilin-2 (Danio rerio (Zebrafish)).